A 520-amino-acid chain; its full sequence is tRNA-2-methylthio-N(6)-dimethylallyladenosine synthase (520 aa).

The MTTase N-terminal domain occupies 77–195 (KKFLIRTYGC…LPHLLRDAIF (119 aa)). Residues cysteine 86, cysteine 122, cysteine 156, cysteine 232, cysteine 236, and cysteine 239 each coordinate [4Fe-4S] cluster. A Radical SAM core domain is found at 218–448 (RKNKTQAWVN…ALVNDISNKR (231 aa)). Positions 450–513 (LDYQDKIVEV…TWSLDGEIVS (64 aa)) constitute a TRAM domain.

Belongs to the methylthiotransferase family. MiaB subfamily. Monomer. Requires [4Fe-4S] cluster as cofactor.

Its subcellular location is the cytoplasm. The enzyme catalyses N(6)-dimethylallyladenosine(37) in tRNA + (sulfur carrier)-SH + AH2 + 2 S-adenosyl-L-methionine = 2-methylsulfanyl-N(6)-dimethylallyladenosine(37) in tRNA + (sulfur carrier)-H + 5'-deoxyadenosine + L-methionine + A + S-adenosyl-L-homocysteine + 2 H(+). Catalyzes the methylthiolation of N6-(dimethylallyl)adenosine (i(6)A), leading to the formation of 2-methylthio-N6-(dimethylallyl)adenosine (ms(2)i(6)A) at position 37 in tRNAs that read codons beginning with uridine. This chain is tRNA-2-methylthio-N(6)-dimethylallyladenosine synthase, found in Shouchella clausii (strain KSM-K16) (Alkalihalobacillus clausii).